We begin with the raw amino-acid sequence, 737 residues long: Glycogen [starch] synthase, muscle (737 aa).

Position 8 is a phosphoserine; by AMPK and PKA (Ser8). The residue at position 11 (Ser11) is a Phosphoserine. A UDP-binding site is contributed by Lys39. Residues His205 and Arg211 each coordinate UDP-alpha-D-glucose. Alpha-D-glucose 6-phosphate-binding residues include His291, Glu292, Gln294, His297, and Lys301. Residue Arg331 coordinates UDP. Arg331 is a UDP-alpha-D-glucose binding site. Ser412 is modified (phosphoserine). Residue His501 coordinates alpha-D-glucose 6-phosphate. UDP-alpha-D-glucose-binding residues include Glu510, Trp512, and Gly513. Residue Thr515 coordinates UDP. 2 residues coordinate alpha-D-glucose 6-phosphate: Arg582 and Arg586. The tract at residues 634–737 (YRYPRPASVP…PTSSLGEERN (104 aa)) is disordered. Phosphoserine is present on residues Ser641, Ser645, Ser649, and Ser652. The residue at position 653 (Ser653) is a Phosphoserine; by GSK3-alpha and GSK3-beta. Ser657 is modified (phosphoserine; by CK2). Over residues 658 to 681 (EDEEDPRNGPLEEDGERYDEDEEA) the composition is skewed to acidic residues. Positions 682 to 695 (AKDRRNIRAPEWPR) are enriched in basic and acidic residues. Ser698 carries the post-translational modification Phosphoserine. The segment covering 698 to 714 (SCTSSTSGSKRNSVDTA) has biased composition (polar residues). Phosphothreonine is present on Thr700. Position 710 is a phosphoserine (Ser710). The span at 715–737 (TSSSLSTPSEPLSPTSSLGEERN) shows a compositional bias: low complexity. Phosphothreonine is present on Thr721. Ser727 and Ser731 each carry phosphoserine.

It belongs to the glycosyltransferase 3 family. As to quaternary structure, part of the GYS1-GYG1 complex, a heterooctamer composed of a tetramer of GYS1 and 2 dimers of GYG1, where each GYS1 protomer binds to one GYG1 subunit (via GYG1 C-terminus); the GYS1 tetramer may dissociate from GYG1 dimers to continue glycogen polymerization on its own. Phosphorylation at Ser-8 by AMPK inactivates the enzyme activity. Primed phosphorylation at Ser-657 (site 5) by CSNK2A1 and CSNK2A2 is required for inhibitory phosphorylation at Ser-641 (site 3a), Ser-645 (site 3b), Ser-649 (site 3c) and Ser-653 (site 4) by GSK3A an GSK3B. Phosphorylated at Ser-641 by DYRK2, leading to inactivation. Phosphorylated at Ser-641 by PASK, leading to inactivation; phosphorylation by PASK is inhibited by glycogen. Dephosphorylation at Ser-641 and Ser-645 by PP1 activates the enzyme. As to expression, expressed in skeletal muscle and most other cell types where glycogen is present.

It carries out the reaction [(1-&gt;4)-alpha-D-glucosyl](n) + UDP-alpha-D-glucose = [(1-&gt;4)-alpha-D-glucosyl](n+1) + UDP + H(+). Its pathway is glycan biosynthesis; glycogen biosynthesis. Its activity is regulated as follows. Allosteric activation by glucose-6-phosphate. Phosphorylation reduces enzyme activity by constraining a tense conformation of the tetramer through inter-subunit interaction. Phosphorylation reduces the activity towards UDP-glucose. When in the non-phosphorylated state, glycogen synthase does not require glucose-6-phosphate as an allosteric activator; when phosphorylated it does. Glycogen synthase participates in the glycogen biosynthetic process along with glycogenin and glycogen branching enzyme. Extends the primer composed of a few glucose units formed by glycogenin by adding new glucose units to it. In this context, glycogen synthase transfers the glycosyl residue from UDP-Glc to the non-reducing end of alpha-1,4-glucan. This is Glycogen [starch] synthase, muscle from Homo sapiens (Human).